The following is a 213-amino-acid chain: Phospho-2-dehydro-3-deoxyheptonate aldolase, Tyr-sensitive (213 aa).

It belongs to the class-I DAHP synthase family.

It catalyses the reaction D-erythrose 4-phosphate + phosphoenolpyruvate + H2O = 7-phospho-2-dehydro-3-deoxy-D-arabino-heptonate + phosphate. It functions in the pathway metabolic intermediate biosynthesis; chorismate biosynthesis; chorismate from D-erythrose 4-phosphate and phosphoenolpyruvate: step 1/7. Its function is as follows. Stereospecific condensation of phosphoenolpyruvate (PEP) and D-erythrose-4-phosphate (E4P) giving rise to 3-deoxy-D-arabino-heptulosonate-7-phosphate (DAHP). This is Phospho-2-dehydro-3-deoxyheptonate aldolase, Tyr-sensitive (aroF) from Enterobacter agglomerans (Erwinia herbicola).